The following is a 330-amino-acid chain: Methionine import ATP-binding protein MetN (330 aa).

An ABC transporter domain is found at 2–241; that stretch reads IAFRGVSKVY…PSTRLHQLCF (240 aa). 38-45 lines the ATP pocket; the sequence is GQSGAGKS.

This sequence belongs to the ABC transporter superfamily. Methionine importer (TC 3.A.1.24) family. The complex is composed of two ATP-binding proteins (MetN), two transmembrane proteins (MetI) and a solute-binding protein (MetQ).

It localises to the cell inner membrane. It carries out the reaction L-methionine(out) + ATP + H2O = L-methionine(in) + ADP + phosphate + H(+). The enzyme catalyses D-methionine(out) + ATP + H2O = D-methionine(in) + ADP + phosphate + H(+). Functionally, part of the ABC transporter complex MetNIQ involved in methionine import. Responsible for energy coupling to the transport system. The protein is Methionine import ATP-binding protein MetN of Myxococcus xanthus (strain DK1622).